Consider the following 463-residue polypeptide: L-seryl-tRNA(Sec) selenium transferase (463 aa).

An N6-(pyridoxal phosphate)lysine modification is found at Lys295.

The protein belongs to the SelA family. Homodecamer; pentamer of dimers. Binds only one seryl-tRNA(Sec) per dimer. It depends on pyridoxal 5'-phosphate as a cofactor.

The protein localises to the cytoplasm. It catalyses the reaction L-seryl-tRNA(Sec) + selenophosphate + H(+) = L-selenocysteinyl-tRNA(Sec) + phosphate. Its pathway is aminoacyl-tRNA biosynthesis; selenocysteinyl-tRNA(Sec) biosynthesis; selenocysteinyl-tRNA(Sec) from L-seryl-tRNA(Sec) (bacterial route): step 1/1. Converts seryl-tRNA(Sec) to selenocysteinyl-tRNA(Sec) required for selenoprotein biosynthesis. The protein is L-seryl-tRNA(Sec) selenium transferase of Escherichia coli O7:K1 (strain IAI39 / ExPEC).